Reading from the N-terminus, the 440-residue chain is Thymidine phosphorylase (440 aa).

The protein belongs to the thymidine/pyrimidine-nucleoside phosphorylase family. In terms of assembly, homodimer.

It catalyses the reaction thymidine + phosphate = 2-deoxy-alpha-D-ribose 1-phosphate + thymine. It participates in pyrimidine metabolism; dTMP biosynthesis via salvage pathway; dTMP from thymine: step 1/2. Its function is as follows. The enzymes which catalyze the reversible phosphorolysis of pyrimidine nucleosides are involved in the degradation of these compounds and in their utilization as carbon and energy sources, or in the rescue of pyrimidine bases for nucleotide synthesis. The protein is Thymidine phosphorylase of Erwinia tasmaniensis (strain DSM 17950 / CFBP 7177 / CIP 109463 / NCPPB 4357 / Et1/99).